Reading from the N-terminus, the 346-residue chain is Isopentenyl-diphosphate delta-isomerase (346 aa).

12–13 (RK) contributes to the substrate binding site. Residues 67 to 69 (ALT), serine 97, and asparagine 126 contribute to the FMN site. 97 to 99 (SQR) contacts substrate. Glutamine 156 provides a ligand contact to substrate. Glutamate 157 is a Mg(2+) binding site. Residues lysine 188, threonine 218, 263–265 (GIR), and 284–285 (AG) each bind FMN.

This sequence belongs to the IPP isomerase type 2 family. Homooctamer. Dimer of tetramers. FMN is required as a cofactor. The cofactor is NADPH. It depends on Mg(2+) as a cofactor.

The protein localises to the cytoplasm. It carries out the reaction isopentenyl diphosphate = dimethylallyl diphosphate. Functionally, involved in the biosynthesis of isoprenoids. Catalyzes the 1,3-allylic rearrangement of the homoallylic substrate isopentenyl (IPP) to its allylic isomer, dimethylallyl diphosphate (DMAPP). This Moorella thermoacetica (strain ATCC 39073 / JCM 9320) protein is Isopentenyl-diphosphate delta-isomerase.